The primary structure comprises 208 residues: LysM and putative peptidoglycan-binding domain-containing protein 2 (208 aa).

The disordered stretch occupies residues 1–54 (MAEFSPVLPPLRDDGGGGRYGQPLFPRSRSGSESDSELSQSLARTKTRSYGSTA). A compositionally biased stretch (low complexity) spans 27 to 42 (RSRSGSESDSELSQSL). A LysM domain is found at 65–109 (IEHRVTDGETLQGIALKYGVTMEQIKRVNKLFSNDCIFLRNTLSI). Disordered stretches follow at residues 122–169 (LSLE…EELS) and 187–208 (AARK…YQEI). Positions 129–140 (SEGNTPQESPCV) are enriched in polar residues. Residues 147-156 (PSPPPEPSVP) show a composition bias toward pro residues.

This is LysM and putative peptidoglycan-binding domain-containing protein 2 (lysmd2) from Danio rerio (Zebrafish).